The sequence spans 258 residues: D-beta-hydroxybutyrate dehydrogenase (258 aa).

6–30 (VITGSTSGIGLAIARTLAKAGANIV) contributes to the NAD(+) binding site. S140 provides a ligand contact to substrate. Y153 serves as the catalytic Proton acceptor.

It belongs to the short-chain dehydrogenases/reductases (SDR) family.

It catalyses the reaction (R)-3-hydroxybutanoate + NAD(+) = acetoacetate + NADH + H(+). The sequence is that of D-beta-hydroxybutyrate dehydrogenase (bdhA) from Rhizobium meliloti (strain 1021) (Ensifer meliloti).